An 821-amino-acid polypeptide reads, in one-letter code: MAKFALNQNLPDLGGPRLCPVPAAGGARSPSSPYSVETPYGFHLDLDFLKYIEELERGPAARRAPGPPTSRRPRAPRPGLAGARSPGAWTSSESLASDDGGAPGILSQGAPSGLLMQPLSPRAPVRNPRVEHTLRETSRRLELAQTHERAPSPGRGVPRSPRGSGRSSPAPNLAPASPGPAQLQLVREQMAAALRRLRELEDQARTLPELQEQVRALRAEKARLLAGRAQPEPDGEAETRPDKLAQLRRLTERLATSERGGRARASPRADSPDGLAAGRSEGALQVLDGEVGSLDGTPQTREVAAEAVPETREAGAQAVPETREAGVEAAPETVEADAWVTEALLGLPAAAERELELLRASLEHQRGVSELLRGRLRELEEAREAAEEAAAGARAQLREATTQTPWSCAEKAAQTESPAEAPSLTQESSPGSMDGDRAVAPAGILKSIMKKRDGTPGAQPSSGPKSLQFVGVLNGEYESSSSEDASDSDGDSENGGAEPPGSSSGSGDDSGGGSDSGTPGPPSGGDIRDPEPEAEAEPQQVAQGRCELSPRLREACVALQRQLSRPRGVASDGGAVRLVAQEWFRVSSQRRSQAEPVARMLEGVRRLGPELLAHVVNLADGNGNTALHYSVSHGNLAIASLLLDTGACEVNRQNRAGYSALMLAALTSVRQEEEDMAVVQRLFCMGDVNAKASQTGQTALMLAISHGRQDMVATLLACGADVNAQDADGATALMCASEYGRLDTVRLLLTQPGCDPAILDNEGTSALAIALEAEQDEVAALLHAHLSSGQPDTQSESPPGSQTATPGEGECGDNGENPQVQ.

Residues 1 to 10 (MAKFALNQNL) are compositionally biased toward polar residues. Disordered regions lie at residues 1-36 (MAKF…PYSV), 58-184 (GPAA…AQLQ), 224-333 (LLAG…APET), and 385-547 (AAEE…GRCE). The segment covering 77-88 (RPGLAGARSPGA) has biased composition (low complexity). The span at 128–150 (PRVEHTLRETSRRLELAQTHERA) shows a compositional bias: basic and acidic residues. The segment covering 151–181 (PSPGRGVPRSPRGSGRSSPAPNLAPASPGPA) has biased composition (low complexity). Phosphoserine occurs at positions 152, 160, 164, 167, 168, and 177. The stretch at 181–230 (AQLQLVREQMAAALRRLRELEDQARTLPELQEQVRALRAEKARLLAGRAQ) forms a coiled coil. Residues 237 to 261 (AETRPDKLAQLRRLTERLATSERGG) are compositionally biased toward basic and acidic residues. A phosphoserine mark is found at Ser-271, Ser-280, and Ser-293. Residues 367 to 404 (GVSELLRGRLRELEEAREAAEEAAAGARAQLREATTQT) adopt a coiled-coil conformation. Low complexity-rich tracts occupy residues 388–400 (EAAA…LREA) and 494–507 (NGGA…SGSG). ANK repeat units lie at residues 622 to 652 (NGNT…EVNR), 656 to 690 (AGYS…DVNA), 695 to 724 (TGQT…DVNA), 728 to 758 (DGAT…DPAI), and 762 to 785 (EGTS…LHAH). Positions 784–821 (AHLSSGQPDTQSESPPGSQTATPGEGECGDNGENPQVQ) are disordered. Residues 787 to 805 (SSGQPDTQSESPPGSQTAT) are compositionally biased toward polar residues.

As to expression, strongly expressed in breast, liver, lung, skeletal muscle and kidney.

Its function is as follows. May be involved in the control of cytoskeleton formation by regulating actin polymerization. This is KN motif and ankyrin repeat domain-containing protein 3 from Homo sapiens (Human).